Reading from the N-terminus, the 322-residue chain is Lipoyl synthase (322 aa).

Cys69, Cys74, Cys80, Cys95, Cys99, Cys102, and Ser309 together coordinate [4Fe-4S] cluster. The Radical SAM core domain occupies 81 to 298 (FNHGTATFMI…KEIALELGFT (218 aa)).

This sequence belongs to the radical SAM superfamily. Lipoyl synthase family. Requires [4Fe-4S] cluster as cofactor.

The protein localises to the cytoplasm. The enzyme catalyses [[Fe-S] cluster scaffold protein carrying a second [4Fe-4S](2+) cluster] + N(6)-octanoyl-L-lysyl-[protein] + 2 oxidized [2Fe-2S]-[ferredoxin] + 2 S-adenosyl-L-methionine + 4 H(+) = [[Fe-S] cluster scaffold protein] + N(6)-[(R)-dihydrolipoyl]-L-lysyl-[protein] + 4 Fe(3+) + 2 hydrogen sulfide + 2 5'-deoxyadenosine + 2 L-methionine + 2 reduced [2Fe-2S]-[ferredoxin]. It participates in protein modification; protein lipoylation via endogenous pathway; protein N(6)-(lipoyl)lysine from octanoyl-[acyl-carrier-protein]: step 2/2. Functionally, catalyzes the radical-mediated insertion of two sulfur atoms into the C-6 and C-8 positions of the octanoyl moiety bound to the lipoyl domains of lipoate-dependent enzymes, thereby converting the octanoylated domains into lipoylated derivatives. This Photobacterium profundum (strain SS9) protein is Lipoyl synthase.